Consider the following 153-residue polypeptide: Ribosome maturation factor RimP (153 aa).

Belongs to the RimP family.

It is found in the cytoplasm. Its function is as follows. Required for maturation of 30S ribosomal subunits. The sequence is that of Ribosome maturation factor RimP from Clostridium botulinum (strain Loch Maree / Type A3).